A 187-amino-acid chain; its full sequence is Probable carboxylesterase Culp7 (187 aa).

Residues Cys-15 and Cys-69 are joined by a disulfide bond. The active-site Nucleophile is the Ser-80. Residues Cys-151 and Cys-158 are joined by a disulfide bond. Residue Asp-155 is part of the active site. His-167 functions as the Proton donor/acceptor in the catalytic mechanism.

The protein belongs to the cutinase family.

It is found in the cytoplasm. The protein resides in the cell membrane. Its subcellular location is the secreted. It localises to the cell wall. In terms of biological role, may have a role in cell wall processes. Does not exhibit cutinase activity. This is Probable carboxylesterase Culp7 from Mycobacterium tuberculosis (strain ATCC 25618 / H37Rv).